A 59-amino-acid polypeptide reads, in one-letter code: Large ribosomal subunit protein uL30 (59 aa).

The protein belongs to the universal ribosomal protein uL30 family. As to quaternary structure, part of the 50S ribosomal subunit.

This is Large ribosomal subunit protein uL30 from Listeria innocua serovar 6a (strain ATCC BAA-680 / CLIP 11262).